We begin with the raw amino-acid sequence, 325 residues long: HTH-type transcriptional regulator VqsM (325 aa).

The HTH araC/xylS-type domain occupies 226 to 323; the sequence is QRIELFLDSI…GQSTTEFRNS (98 aa). 2 consecutive DNA-binding regions (H-T-H motif) follow at residues 243 to 264 and 290 to 313; these read VTTAKYLRMNERTVRRRLADEG and VDRISDILGYSETASFRHAFRRWT.

In terms of biological role, transcriptional regulator involved in both the repression (at least 99 genes, such as mexR and algU) and in the activation (at least 203 genes, such as mvfR, rsaL, vqsR and rpoS) of regulatory or putative regulatory proteins which are implicated in quorum sensing, virulence and multidrug resistance. The sequence is that of HTH-type transcriptional regulator VqsM (vqsM) from Pseudomonas aeruginosa (strain ATCC 15692 / DSM 22644 / CIP 104116 / JCM 14847 / LMG 12228 / 1C / PRS 101 / PAO1).